Here is a 509-residue protein sequence, read N- to C-terminus: Polyadenylation factor subunit 2 (509 aa).

WD repeat units lie at residues 72–109 (YIHT…TLWN), 113–151 (FNFE…KYFE), 156–192 (NVKI…KVWN), 196–234 (STEE…KFWD), 238–278 (GTCI…RVFD), 282–321 (MKDV…NHYS), and 350–388 (YPTA…RFWS). 2 disordered regions span residues 385–409 (RFWS…EEQS) and 480–509 (SNSY…QNYR). A compositionally biased stretch (basic and acidic residues) spans 390–406 (SRPDDKESTMDRHHLGE).

It is found in the nucleus. In terms of biological role, required for 3'-end cleavage and polyadenylation of pre-mRNAs. Also involved in chromosome segregation where it has a role in chromosome attachment to the mitotic spindle. This is Polyadenylation factor subunit 2 (pfs2) from Schizosaccharomyces pombe (strain 972 / ATCC 24843) (Fission yeast).